Consider the following 801-residue polypeptide: PR domain zinc finger protein 4 (801 aa).

One can recognise an SET domain in the interval 412–529 (KQLVLRQSIV…PENELLFYYS (118 aa)). A C2H2-type 1; atypical zinc finger spans residues 545-566 (HLCNCGKECNSYTEFKAHLTSH). 4 consecutive C2H2-type zinc fingers follow at residues 618-640 (HKCD…LKIH), 646-668 (YRCT…MVIH), 674-696 (LKCD…VLIH), and 702-724 (IKCP…LNSH). Residues 730-752 (YVCEKCTKAYLTKYHLTRHLKTC) form a C2H2-type 6; atypical zinc finger. The tract at residues 751–782 (TCKGPTSSSSAPEEEEEDDSEEEDLADSVGTE) is disordered. The span at 762–776 (PEEEEEDDSEEEDLA) shows a compositional bias: acidic residues.

The protein belongs to the class V-like SAM-binding methyltransferase superfamily. Expressed in many tissues. Highly expressed in ovary, testis, pancreas, brain, heart and prostate.

Its subcellular location is the nucleus. Functionally, may function as a transcription factor involved in cell differentiation. The polypeptide is PR domain zinc finger protein 4 (PRDM4) (Homo sapiens (Human)).